Reading from the N-terminus, the 61-residue chain is Mu-diguetoxin-Dc1c (61 aa).

3 disulfide bridges follow: cysteine 12–cysteine 25, cysteine 19–cysteine 39, and cysteine 24–cysteine 53.

This sequence belongs to the neurotoxin 26 (DTX) family. As to expression, expressed by the venom gland.

It is found in the secreted. Functionally, acts by delaying the inactivation of presynaptic voltage-sensitive sodium channels (Nav). Acts against insects and causes a progressive spastic paralysis. This Diguetia canities (Desert bush spider) protein is Mu-diguetoxin-Dc1c.